The primary structure comprises 361 residues: Aurora kinase B-A (361 aa).

The Protein kinase domain maps to 93 to 343 (FDIGRPLGKG…LKGVMEHPWV (251 aa)). ATP is bound by residues 99–107 (LGKGKFGNV) and lysine 122. Aspartate 216 functions as the Proton acceptor in the catalytic mechanism.

It belongs to the protein kinase superfamily. Ser/Thr protein kinase family. Aurora subfamily. Component of the CPC at least composed of survivin/birc5, incenp, cdca8/borealin and/or cdca9/dasra-A, and aurkb/aurora-B. Interacts directly (via N-terminus and kinase domain) with incenp (via C terminus), and may weakly interact (via N-terminus) with birc5.1 to stabilize the complex. Interacts with mtus1. Requires Mg(2+) as cofactor. Phosphorylated, stimulates kinase activity.

The protein localises to the nucleus. The protein resides in the chromosome. The enzyme catalyses L-seryl-[protein] + ATP = O-phospho-L-seryl-[protein] + ADP + H(+). The catalysed reaction is L-threonyl-[protein] + ATP = O-phospho-L-threonyl-[protein] + ADP + H(+). With respect to regulation, kinase activity is stimulated by both birc5/survivin-binding and cell-cycle specific phosphorylation. Its function is as follows. Serine/threonine-protein kinase component of the chromosomal passenger complex (CPC), a complex that acts as a key regulator of mitosis. The CPC complex has essential functions at the centromere in ensuring correct chromosome alignment and segregation and is required for chromatin-induced microtubule stabilization and spindle assembly. Involved in the bipolar attachment of spindle microtubules to kinetochores and is a key regulator for the onset of cytokinesis during mitosis. Required for central/midzone spindle assembly and cleavage furrow formation. Key component of the cytokinesis checkpoint, a process required to delay abscission to prevent both premature resolution of intercellular chromosome bridges and accumulation of DNA damage. Phosphorylates 'Ser-10' of histone H3 during mitosis. This chain is Aurora kinase B-A (aurkb-a), found in Xenopus laevis (African clawed frog).